The following is a 394-amino-acid chain: 1-deoxy-D-xylulose 5-phosphate reductoisomerase (394 aa).

Residues Thr10, Gly11, Ser12, Ile13, Gly38, Arg39, Asn40, and Asn123 each contribute to the NADPH site. Position 124 (Lys124) interacts with 1-deoxy-D-xylulose 5-phosphate. NADPH is bound at residue Glu125. A Mn(2+)-binding site is contributed by Asp149. Residues Ser150, Glu151, Ser175, and His198 each contribute to the 1-deoxy-D-xylulose 5-phosphate site. Glu151 provides a ligand contact to Mn(2+). Gly204 is an NADPH binding site. Positions 211, 216, 217, and 220 each coordinate 1-deoxy-D-xylulose 5-phosphate. Glu220 provides a ligand contact to Mn(2+).

It belongs to the DXR family. Mg(2+) is required as a cofactor. It depends on Mn(2+) as a cofactor.

It carries out the reaction 2-C-methyl-D-erythritol 4-phosphate + NADP(+) = 1-deoxy-D-xylulose 5-phosphate + NADPH + H(+). Its pathway is isoprenoid biosynthesis; isopentenyl diphosphate biosynthesis via DXP pathway; isopentenyl diphosphate from 1-deoxy-D-xylulose 5-phosphate: step 1/6. Catalyzes the NADPH-dependent rearrangement and reduction of 1-deoxy-D-xylulose-5-phosphate (DXP) to 2-C-methyl-D-erythritol 4-phosphate (MEP). The protein is 1-deoxy-D-xylulose 5-phosphate reductoisomerase of Cereibacter sphaeroides (strain KD131 / KCTC 12085) (Rhodobacter sphaeroides).